A 698-amino-acid chain; its full sequence is Phenylalanine aminomutase (L-beta-phenylalanine forming) (698 aa).

Residue Tyr-80 is the Proton donor/acceptor of the active site. A cross-link (5-imidazolinone (Ala-Gly)) is located at residues 175-177; it reads ASG. 2,3-didehydroalanine (Ser) is present on Ser-176. 7 residues coordinate (E)-cinnamate: Asn-231, Gln-319, Arg-325, Asn-355, Lys-427, Glu-455, and Asn-458.

Belongs to the PAL/histidase family. In terms of assembly, homotetramer. Contains an active site 4-methylidene-imidazol-5-one (MIO), which is formed autocatalytically by cyclization and dehydration of residues Ala-Ser-Gly.

It localises to the cytoplasm. It carries out the reaction L-phenylalanine = L-beta-phenylalanine. The enzyme catalyses L-phenylalanine = (E)-cinnamate + NH4(+). It participates in alkaloid biosynthesis; taxol biosynthesis. The protein operates within phenylpropanoid metabolism; trans-cinnamate biosynthesis; trans-cinnamate from L-phenylalanine: step 1/1. In terms of biological role, phenylalanine aminomutase that catalyzes the rearrangement of L-phenylalanine to R-beta-phenylalanine. Catalyzes the first committed step in the biosynthesis of the side chain of the alkaloid taxol (paclitaxel), a widely-used compound with antitumor activity. Also has low phenylalanine ammonia-lyase activity. In Taxus canadensis (Canadian yew), this protein is Phenylalanine aminomutase (L-beta-phenylalanine forming) (pam).